A 501-amino-acid chain; its full sequence is Glycerol kinase (501 aa).

Position 17 (Thr-17) interacts with ADP. ATP is bound by residues Thr-17, Thr-18, and Ser-19. Thr-17 contributes to the sn-glycerol 3-phosphate binding site. Arg-21 serves as a coordination point for ADP. The sn-glycerol 3-phosphate site is built by Arg-87, Glu-88, Tyr-139, and Asp-243. Positions 87, 88, 139, 243, and 244 each coordinate glycerol. ADP is bound by residues Thr-265 and Gly-308. Positions 265, 308, 312, and 409 each coordinate ATP. ADP-binding residues include Gly-409 and Asn-413.

It belongs to the FGGY kinase family.

The enzyme catalyses glycerol + ATP = sn-glycerol 3-phosphate + ADP + H(+). Its pathway is polyol metabolism; glycerol degradation via glycerol kinase pathway; sn-glycerol 3-phosphate from glycerol: step 1/1. Inhibited by fructose 1,6-bisphosphate (FBP). Its function is as follows. Key enzyme in the regulation of glycerol uptake and metabolism. Catalyzes the phosphorylation of glycerol to yield sn-glycerol 3-phosphate. In Pseudomonas savastanoi pv. phaseolicola (strain 1448A / Race 6) (Pseudomonas syringae pv. phaseolicola (strain 1448A / Race 6)), this protein is Glycerol kinase.